A 172-amino-acid chain; its full sequence is 6,7-dimethyl-8-ribityllumazine synthase (172 aa).

5-amino-6-(D-ribitylamino)uracil contacts are provided by residues phenylalanine 24, 58–60 (ALE), and 82–84 (AVI). 87-88 (ET) is a (2S)-2-hydroxy-3-oxobutyl phosphate binding site. Residue histidine 90 is the Proton donor of the active site. A 5-amino-6-(D-ribitylamino)uracil-binding site is contributed by asparagine 115. Arginine 129 serves as a coordination point for (2S)-2-hydroxy-3-oxobutyl phosphate. The interval 150–172 (ALDQLGDDDEDEEEDEDDEEERA) is disordered. The span at 154–172 (LGDDDEDEEEDEDDEEERA) shows a compositional bias: acidic residues.

It belongs to the DMRL synthase family.

It carries out the reaction (2S)-2-hydroxy-3-oxobutyl phosphate + 5-amino-6-(D-ribitylamino)uracil = 6,7-dimethyl-8-(1-D-ribityl)lumazine + phosphate + 2 H2O + H(+). It functions in the pathway cofactor biosynthesis; riboflavin biosynthesis; riboflavin from 2-hydroxy-3-oxobutyl phosphate and 5-amino-6-(D-ribitylamino)uracil: step 1/2. Functionally, catalyzes the formation of 6,7-dimethyl-8-ribityllumazine by condensation of 5-amino-6-(D-ribitylamino)uracil with 3,4-dihydroxy-2-butanone 4-phosphate. This is the penultimate step in the biosynthesis of riboflavin. In Burkholderia multivorans (strain ATCC 17616 / 249), this protein is 6,7-dimethyl-8-ribityllumazine synthase.